The chain runs to 586 residues: Succinate dehydrogenase flavoprotein subunit (586 aa).

FAD-binding positions include 10–15 and 33–48; these read GGGLAG and SIVP…AQGG. H41 carries the tele-8alpha-FAD histidine modification. Positions 236 and 250 each coordinate substrate. The active-site Proton acceptor is R285. Substrate is bound at residue H352. E376 contacts FAD. R386 is a binding site for substrate. 391-392 provides a ligand contact to FAD; that stretch reads SL.

The protein belongs to the FAD-dependent oxidoreductase 2 family. FRD/SDH subfamily. In B.subtilis succinate dehydrogenase forms part of an enzyme complex containing three subunits: a flavoprotein, an iron-sulfur protein and cytochrome b-558. Interacts with FloT. FAD serves as cofactor.

It is found in the cell membrane. It localises to the membrane raft. It carries out the reaction a quinone + succinate = fumarate + a quinol. It functions in the pathway carbohydrate metabolism; tricarboxylic acid cycle; fumarate from succinate (bacterial route): step 1/1. In Bacillus subtilis (strain 168), this protein is Succinate dehydrogenase flavoprotein subunit (sdhA).